The following is a 701-amino-acid chain: Polyribonucleotide nucleotidyltransferase (701 aa).

Positions 489 and 495 each coordinate Mg(2+). Residues 556-615 form the KH domain; that stretch reads PRIHTMKIHPDKIREVIGSGGKVIRSITEETGCAIDIEDDGTIRIASSDQASAEQAVKII. An S1 motif domain is found at 625–693; it reads GQVYEGKVVR…RQGRVKLTMK (69 aa).

This sequence belongs to the polyribonucleotide nucleotidyltransferase family. The cofactor is Mg(2+).

The protein resides in the cytoplasm. It carries out the reaction RNA(n+1) + phosphate = RNA(n) + a ribonucleoside 5'-diphosphate. Involved in mRNA degradation. Catalyzes the phosphorolysis of single-stranded polyribonucleotides processively in the 3'- to 5'-direction. In Magnetococcus marinus (strain ATCC BAA-1437 / JCM 17883 / MC-1), this protein is Polyribonucleotide nucleotidyltransferase.